The chain runs to 97 residues: Cytochrome c oxidase subunit 4 isoform 1, mitochondrial (97 aa).

The transit peptide at 1 to 22 directs the protein to the mitochondrion; it reads MLATRVFNLIGRRAISTSVCVR. Lys-29 bears the N6-acetyllysine; alternate mark. N6-succinyllysine; alternate is present on Lys-29. Lys-53 is modified (N6-acetyllysine). A phosphoserine mark is found at Ser-56 and Ser-58. Lys-60 carries the post-translational modification N6-acetyllysine; alternate. The residue at position 60 (Lys-60) is an N6-succinyllysine; alternate. Residue Lys-67 is modified to N6-acetyllysine.

The protein belongs to the cytochrome c oxidase IV family. Component of the cytochrome c oxidase (complex IV, CIV), a multisubunit enzyme composed of 14 subunits. The complex is composed of a catalytic core of 3 subunits MT-CO1, MT-CO2 and MT-CO3, encoded in the mitochondrial DNA, and 11 supernumerary subunits COX4I, COX5A, COX5B, COX6A, COX6B, COX6C, COX7A, COX7B, COX7C, COX8 and NDUFA4, which are encoded in the nuclear genome. The complex exists as a monomer or a dimer and forms supercomplexes (SCs) in the inner mitochondrial membrane with NADH-ubiquinone oxidoreductase (complex I, CI) and ubiquinol-cytochrome c oxidoreductase (cytochrome b-c1 complex, complex III, CIII), resulting in different assemblies (supercomplex SCI(1)III(2)IV(1) and megacomplex MCI(2)III(2)IV(2)). Interacts with PHB2; the interaction decreases in absence of SPHK2. Interacts with AFG1L. Interacts with ABCB7; this interaction allows the regulation of cellular iron homeostasis and cellular reactive oxygen species (ROS) levels in cardiomyocytes. Interacts with FLVCR2; this interaction occurs in the absence of heme and is disrupted upon heme binding. Interacts with IRGC.

The protein localises to the mitochondrion inner membrane. It participates in energy metabolism; oxidative phosphorylation. Component of the cytochrome c oxidase, the last enzyme in the mitochondrial electron transport chain which drives oxidative phosphorylation. The respiratory chain contains 3 multisubunit complexes succinate dehydrogenase (complex II, CII), ubiquinol-cytochrome c oxidoreductase (cytochrome b-c1 complex, complex III, CIII) and cytochrome c oxidase (complex IV, CIV), that cooperate to transfer electrons derived from NADH and succinate to molecular oxygen, creating an electrochemical gradient over the inner membrane that drives transmembrane transport and the ATP synthase. Cytochrome c oxidase is the component of the respiratory chain that catalyzes the reduction of oxygen to water. Electrons originating from reduced cytochrome c in the intermembrane space (IMS) are transferred via the dinuclear copper A center (CU(A)) of subunit 2 and heme A of subunit 1 to the active site in subunit 1, a binuclear center (BNC) formed by heme A3 and copper B (CU(B)). The BNC reduces molecular oxygen to 2 water molecules using 4 electrons from cytochrome c in the IMS and 4 protons from the mitochondrial matrix. The protein is Cytochrome c oxidase subunit 4 isoform 1, mitochondrial (COX4I1) of Sus scrofa (Pig).